Consider the following 32-residue polypeptide: Cyclotide glopa B (32 aa).

The cyclopeptide (Gly-Asn) cross-link spans 1 to 32 (GGSVPCIETCVWTGCFLVPGCSCKSDKKCYLN). 3 cysteine pairs are disulfide-bonded: Cys-6–Cys-21, Cys-10–Cys-23, and Cys-15–Cys-29.

In terms of processing, this is a cyclic peptide.

Probably participates in a plant defense mechanism. This is Cyclotide glopa B from Gloeospermum pauciflorum.